A 760-amino-acid chain; its full sequence is Ferric/cupric reductase transmembrane component 1 (760 aa).

An N-terminal signal peptide occupies residues 1 to 18; the sequence is MKIQQLIVFLFAVVLIDA. At 19–212 the chain is on the extracellular side; the sequence is RTPKRYSELD…NNNFNLSINY (194 aa). Residues Asn78, Asn91, Asn111, Asn143, Asn155, and Asn207 are each glycosylated (N-linked (GlcNAc...) asparagine). A disordered region spans residues 119-177; it reads TTKSSSGSKTSASASKSSKSTGSSNASKSSTNAHGSNSSTSSTSSSSSKSGKGNSGTST. The chain crosses the membrane as a helical span at residues 213–233; it reads GSGLLGYWAGILAIAIFANMI. Over 234–288 the chain is Cytoplasmic; that stretch reads KKMFPSLTNYLSGSISNLFRKHLFLPATFRKKKAQEFSIGVYGFFDGLIPTRLET. The chain crosses the membrane as a helical span at residues 289–309; the sequence is IIVVIFVVLTGLFSALHIHHV. At 310-324 the chain is on the extracellular side; that stretch reads KDNPQYATKNAELGH. Residues 325 to 345 form a helical membrane-spanning segment; sequence LIADRTGILGTFLIPLLILFG. The Ferric oxidoreductase domain occupies 330–445; the sequence is TGILGTFLIP…HIVLVVFFVV (116 aa). Topologically, residues 346 to 371 are cytoplasmic; sequence GRNNFLQWLTGWDFATFIMYHRWISR. Heme-binding residues include His366 and His380. The helical transmembrane segment at 372–392 threads the bilayer; it reads VDVLLIIVHAITFSVSDKATG. Residues 393 to 403 are Extracellular-facing; sequence KYNTRMKRDFM. Residues 404 to 424 traverse the membrane as a helical segment; that stretch reads IWGTVSTICGGFILFQAMLFF. The Cytoplasmic portion of the chain corresponds to 425 to 430; that stretch reads RRKCYE. The chain crosses the membrane as a helical span at residues 431-451; sequence VFFLIHIVLVVFFVVGGYYHL. Positions 436 and 450 each coordinate heme. Over 452-760 the chain is Extracellular; it reads ESQGYGDFMW…EYHEQLQTWA (309 aa). An FAD-binding FR-type domain is found at 465–583; that stretch reads AVWAFDRVVR…EGPYGEPSSA (119 aa). 575–578 is a binding site for NADP(+); it reads GPYG. An N-linked (GlcNAc...) asparagine glycan is attached at Asn615. 726–727 lines the NADP(+) pocket; sequence CG. A glycan (N-linked (GlcNAc...) asparagine) is linked at Asn744.

This sequence belongs to the ferric reductase (FRE) family. FAD is required as a cofactor. The cofactor is heme.

The protein localises to the cell membrane. The catalysed reaction is 2 a Fe(II)-siderophore + NADP(+) + H(+) = 2 a Fe(III)-siderophore + NADPH. In terms of biological role, ferric reductase responsible for reducing extracellular iron and copper prior to import. Catalyzes the reductive uptake of Fe(3+)-salts and Fe(3+) bound to catecholate or hydroxamate siderophores. Fe(3+) is reduced to Fe(2+), which then dissociates from the siderophore and can be imported by the high-affinity Fe(2+) transport complex in the plasma membrane. Also participates in Cu(2+) reduction and Cu(+) uptake. Involved in maintenance of cell wall integrity (CWI), mitochondrial function, and interaction between the pathogen and the host. The polypeptide is Ferric/cupric reductase transmembrane component 1 (Candida albicans (strain SC5314 / ATCC MYA-2876) (Yeast)).